The primary structure comprises 422 residues: Oxysterol-binding protein 7 (422 aa).

The tract at residues 283–313 is disordered; the sequence is EAAPASSASKKEKKKEKKKAKHSKHTCSPSD. Basic residues predominate over residues 293–307; the sequence is KEKKKEKKKAKHSKH. The stretch at 354–384 forms a coiled coil; it reads MQAADQIKKEIEDEQRKRLQITKEEEKKERA. The tract at residues 402 to 422 is disordered; the sequence is TLAPVSNSTSSTASDAASGSN. Residues 407–422 are compositionally biased toward low complexity; it reads SNSTSSTASDAASGSN.

The protein belongs to the OSBP family.

The sequence is that of Oxysterol-binding protein 7 (osbG) from Dictyostelium discoideum (Social amoeba).